A 336-amino-acid chain; its full sequence is Potassium channel subfamily K member 1 (336 aa).

Over methionine 1–alanine 20 the chain is Cytoplasmic. The helical transmembrane segment at tryptophan 21–phenylalanine 41 threads the bilayer. At serine 42–aspartate 103 the chain is on the extracellular side. The N-linked (GlcNAc...) asparagine glycan is linked to asparagine 95. The segment at residues phenylalanine 104–serine 116 is an intramembrane region (helical). The stretch at threonine 117–histidine 122 is an intramembrane region. Residues threonine 117–histidine 122 form a selectivity filter 1 region. At threonine 123 to alanine 132 the chain is on the extracellular side. A helical membrane pass occupies residues phenylalanine 133–valine 156. Residues threonine 157–isoleucine 181 lie on the Cytoplasmic side of the membrane. The helical transmembrane segment at valine 182–valine 202 threads the bilayer. At phenylalanine 203–asparagine 211 the chain is on the extracellular side. An intramembrane region (helical) is located at residues phenylalanine 212–serine 224. Residues threonine 225–aspartate 230 form a selectivity filter 2 region. The stretch at threonine 225 to tyrosine 231 is an intramembrane region. The Extracellular segment spans residues valine 232–glutamate 243. Residues leucine 244 to phenylalanine 267 traverse the membrane as a helical segment. Topologically, residues cysteine 268–histidine 336 are cytoplasmic. Residue lysine 274 forms a Glycyl lysine isopeptide (Lys-Gly) (interchain with G-Cter in SUMO) linkage. The tract at residues isoleucine 293–leucine 299 is important for intracellular retention in recycling endosomes. The disordered stretch occupies residues glycine 310–histidine 336. A Phosphoserine modification is found at serine 326.

This sequence belongs to the two pore domain potassium channel (TC 1.A.1.8) family. Homodimer; disulfide-linked. Heterodimer with KCNK2; disulfide-linked. In astrocytes, forms mostly heterodimeric potassium channels with KCNK2, with only a minor proportion of functional channels containing homodimeric KCNK1. Interacts with KCNK3 and KCNK9, forming functional heterodimeric channels. Interacts with GNG4. Identified in a complex with PSD and ARF6; interacts only with PSD that is bound to ARF6. Interacts with UBE2I. In terms of processing, sumoylation is controversial. Sumoylated by UBE2I. Not sumoylated when expressed in xenopus oocytes or mammalian cells. Sumoylation inactivates the channel, but does not interfere with expression at the cell membrane. Sumoylation of a single subunit is sufficient to silence the dimeric channel. Sumoylation of KCNK1 is sufficient to silence heterodimeric channels formed by KCNK1 and KCNK3 or KCNK9. Desumoylated by SENP1; this activates the channel. Desumoylated by SENP1; this strongly increases halothane-mediated activation of heterodimeric channels formed with KCNK9. SENP1 treatment has no effect. In terms of tissue distribution, detected in spiral ganglion neurons. Detected in hippocampus CA1 and CA1 regions and in the molecular layer of the dentate gyrus. Detected on hippocampus astrocytes. Highly expressed in the stria vascularis in the cochlea. Detected in pancreas islet beta cells. Detected in kidney, at brush border membranes in proximal tubules and in cytoplasmic structures in distal convoluted tubules, thick ascending limbs and collecting ducts (at protein level). Widely expressed. Detected in spiral ganglion cells. Highest expression in brain, kidney, thyroid, salivary gland, adrenal gland, prostate, epididymis, uterus, placenta, colon and jejunum. Moderate expression in eyes, pituitary, pancreas, smooth muscle, testis and ovary. Very low levels in lung, aorta, liver, heart, skeletal muscle, thymus and spleen. In the brain, highest expression in cerebellar granule cells, brainstem, hippocampus and cerebral cortex.

It is found in the cell membrane. The protein localises to the recycling endosome. The protein resides in the apical cell membrane. Its subcellular location is the cytoplasmic vesicle. It localises to the perikaryon. It is found in the cell projection. The protein localises to the dendrite. The protein resides in the synaptic cell membrane. It catalyses the reaction K(+)(in) = K(+)(out). The enzyme catalyses NH4(+)(in) = NH4(+)(out). The catalysed reaction is Na(+)(in) = Na(+)(out). It carries out the reaction Rb(+)(in) = Rb(+)(out). It catalyses the reaction Cs(+)(in) = Cs(+)(out). The enzyme catalyses Li(+)(in) = Li(+)(out). The catalysed reaction is L-glutamate(out) = L-glutamate(in). It carries out the reaction chloride(in) = chloride(out). Inhibited by quinine, quinidine, barium, and internal acidification. Its function is as follows. Ion channel that contributes to passive transmembrane potassium transport and to the regulation of the resting membrane potential in brain astrocytes, but also in kidney and in other tissues. Forms dimeric channels through which potassium ions pass in accordance with their electrochemical gradient. The channel is selective for K(+) ions at physiological potassium concentrations and at neutral pH, but becomes permeable to Na(+) at subphysiological K(+) levels and upon acidification of the extracellular medium. The homodimer has very low potassium channel activity, when expressed in heterologous systems, and can function as weakly inward rectifying potassium channel. Channel activity is modulated by activation of serotonin receptors. Heterodimeric channels containing KCNK1 and KCNK2 have much higher activity, and may represent the predominant form in astrocytes. Heterodimeric channels containing KCNK1 and KCNK3 or KCNK9 have much higher activity. Heterodimeric channels formed by KCNK1 and KCNK9 may contribute to halothane-sensitive currents. Mediates outward rectifying potassium currents in dentate gyrus granule cells and contributes to the regulation of their resting membrane potential. Contributes to the regulation of action potential firing in dentate gyrus granule cells and down-regulates their intrinsic excitability. In astrocytes, the heterodimer formed by KCNK1 and KCNK2 is required for rapid glutamate release in response to activation of G-protein coupled receptors, such as F2R and CNR1. Required for normal ion and water transport in the kidney. Contributes to the regulation of the resting membrane potential of pancreatic beta cells. The low channel activity of homodimeric KCNK1 may be due to sumoylation. The low channel activity may be due to rapid internalization from the cell membrane and retention in recycling endosomes. Permeable to monovalent cations with ion selectivity for K(+) &gt; Rb(+) &gt;&gt; NH4(+) &gt;&gt; Cs(+) = Na(+) = Li(+). The sequence is that of Potassium channel subfamily K member 1 (Kcnk1) from Mus musculus (Mouse).